Consider the following 304-residue polypeptide: Caspase-6 (304 aa).

Positions 1–29 are disordered; it reads MSGAERRPAAGRVQLDSKPTPTTTADGNQ. The propeptide occupies 1 to 35; that stretch reads MSGAERRPAAGRVQLDSKPTPTTTADGNQNITEVD. Polar residues predominate over residues 17–29; sequence SKPTPTTTADGNQ. The tract at residues 54 to 56 is tri-arginine exosite; it reads QRR. His-133 is an active-site residue. A 130's region region spans residues 137 to 154; it reads DHVYAYDAQIKIETITNM. Residue Cys-175 is part of the active site. Residues 192–204 constitute a propeptide that is removed on maturation; that stretch reads SKDETTVNQTEVD.

This sequence belongs to the peptidase C14A family. As to quaternary structure, heterotetramer that consists of two anti-parallel arranged heterodimers, each one formed by a 18 kDa (p18) and a 11 kDa (p11) subunit. Heterotetramer that consists of two anti-parallel arranged heterodimers, each one formed by a 18 kDa (Caspase-6 subunit p18) and a 11 kDa (Caspase-6 subunit p11) subunit. As to expression, widely expressed.

It localises to the cytoplasm. It is found in the nucleus. The catalysed reaction is Strict requirement for Asp at position P1 and has a preferred cleavage sequence of Val-Glu-His-Asp-|-.. With respect to regulation, during activation, the N-terminal prodomain is removed by cleavage. Concomitantly, double cleavage gives rise to a large 18-kDa and a small 11-kDa subunit. The two large and two small subunits then assemble to form the active CASP6 complex. Intramolecular cleavage at Asp-191 is a prerequisite for CASP6 self-activation. Its function is as follows. Cysteine protease that plays essential roles in programmed cell death, development and innate immunity. Acts as a non-canonical executioner caspase during apoptosis: localizes in the nucleus and cleaves the nuclear structural protein lamin-A/LMNA thereby inducing nuclear shrinkage and fragmentation. Lamin-A/LMNA cleavage is required for chromatin condensation and nuclear disassembly during apoptotic execution. Plays an essential role in defense against viruses by acting as a central mediator of the ZBP1-mediated pyroptosis, apoptosis, and necroptosis (PANoptosis), independently of its cysteine protease activity. PANoptosis is a unique inflammatory programmed cell death, which provides a molecular scaffold that allows the interactions and activation of machinery required for inflammasome/pyroptosis, apoptosis and necroptosis. This is Caspase-6 from Gallus gallus (Chicken).